Here is a 147-residue protein sequence, read N- to C-terminus: Large ribosomal subunit protein uL13 (147 aa).

The protein belongs to the universal ribosomal protein uL13 family. In terms of assembly, part of the 50S ribosomal subunit.

This protein is one of the early assembly proteins of the 50S ribosomal subunit, although it is not seen to bind rRNA by itself. It is important during the early stages of 50S assembly. The polypeptide is Large ribosomal subunit protein uL13 (Beutenbergia cavernae (strain ATCC BAA-8 / DSM 12333 / CCUG 43141 / JCM 11478 / NBRC 16432 / NCIMB 13614 / HKI 0122)).